The sequence spans 264 residues: S-adenosylmethionine decarboxylase proenzyme (264 aa).

The active-site Schiff-base intermediate with substrate; via pyruvic acid is Ser111. Ser111 is modified (pyruvic acid (Ser); by autocatalysis). Catalysis depends on His116, which acts as the Proton acceptor; for processing activity. Residue Cys139 is the Proton donor; for catalytic activity of the active site.

This sequence belongs to the prokaryotic AdoMetDC family. Type 2 subfamily. In terms of assembly, heterooctamer of four alpha and four beta chains arranged as a tetramer of alpha/beta heterodimers. Pyruvate is required as a cofactor. In terms of processing, is synthesized initially as an inactive proenzyme. Formation of the active enzyme involves a self-maturation process in which the active site pyruvoyl group is generated from an internal serine residue via an autocatalytic post-translational modification. Two non-identical subunits are generated from the proenzyme in this reaction, and the pyruvate is formed at the N-terminus of the alpha chain, which is derived from the carboxyl end of the proenzyme. The post-translation cleavage follows an unusual pathway, termed non-hydrolytic serinolysis, in which the side chain hydroxyl group of the serine supplies its oxygen atom to form the C-terminus of the beta chain, while the remainder of the serine residue undergoes an oxidative deamination to produce ammonia and the pyruvoyl group blocking the N-terminus of the alpha chain.

It catalyses the reaction S-adenosyl-L-methionine + H(+) = S-adenosyl 3-(methylsulfanyl)propylamine + CO2. Its pathway is amine and polyamine biosynthesis; S-adenosylmethioninamine biosynthesis; S-adenosylmethioninamine from S-adenosyl-L-methionine: step 1/1. Functionally, catalyzes the decarboxylation of S-adenosylmethionine to S-adenosylmethioninamine (dcAdoMet), the propylamine donor required for the synthesis of the polyamines spermine and spermidine from the diamine putrescine. This Geobacillus kaustophilus (strain HTA426) protein is S-adenosylmethionine decarboxylase proenzyme.